A 176-amino-acid polypeptide reads, in one-letter code: NAD(P)H-quinone oxidoreductase subunit 6, chloroplastic (176 aa).

The next 5 membrane-spanning stretches (helical) occupy residues 10-30, 32-52, 61-81, 92-112, and 152-172; these read FLLV…VLLP, PIFS…LYIL, AQLL…VMFM, LWTV…FSLM, and FFLP…GAIS.

It belongs to the complex I subunit 6 family. NDH is composed of at least 16 different subunits, 5 of which are encoded in the nucleus.

It is found in the plastid. Its subcellular location is the chloroplast thylakoid membrane. It catalyses the reaction a plastoquinone + NADH + (n+1) H(+)(in) = a plastoquinol + NAD(+) + n H(+)(out). It carries out the reaction a plastoquinone + NADPH + (n+1) H(+)(in) = a plastoquinol + NADP(+) + n H(+)(out). In terms of biological role, NDH shuttles electrons from NAD(P)H:plastoquinone, via FMN and iron-sulfur (Fe-S) centers, to quinones in the photosynthetic chain and possibly in a chloroplast respiratory chain. The immediate electron acceptor for the enzyme in this species is believed to be plastoquinone. Couples the redox reaction to proton translocation, and thus conserves the redox energy in a proton gradient. This Barbarea verna (Land cress) protein is NAD(P)H-quinone oxidoreductase subunit 6, chloroplastic (ndhG).